A 285-amino-acid polypeptide reads, in one-letter code: Chlorite dismutase (285 aa).

The N-terminal stretch at 1–38 (MKVRCVSLVAAGLLTIAGSAIGQPAPAPMPAMAPAAKP) is a signal peptide. Glu105 contacts Ca(2+). His205 is a binding site for heme. The active-site Proton acceptor is Arg218. Ca(2+)-binding residues include Asp227 and Thr266.

Belongs to the chlorite dismutase family. As to quaternary structure, homopentamer. Heme b serves as cofactor.

It is found in the periplasm. It carries out the reaction chloride + O2 = chlorite. Catalyzes the heme-dependent decomposition of chlorite to O(2) and chloride with high efficiency and specificity. Used to detoxify chlorite, a by-product of the reduction of perchlorate, a primarily anthropogenic pollutant, in perchlorate-respiring bacteria. The protein is Chlorite dismutase (cld) of Ideonella dechloratans.